We begin with the raw amino-acid sequence, 379 residues long: Cytochrome b (379 aa).

4 helical membrane-spanning segments follow: residues 33–53, 77–98, 113–133, and 178–198; these read FGSL…FLAM, WLIR…FIHV, WNIG…GYVL, and FFAF…VHLL. Positions 83 and 97 each coordinate heme b. 2 residues coordinate heme b: His-182 and His-196. His-201 contacts a ubiquinone. The next 4 membrane-spanning stretches (helical) occupy residues 226–246, 288–308, 320–340, and 347–367; these read TKDL…ALFF, LGGV…PLLN, VTQV…WIGG, and FTTI…ILIP.

This sequence belongs to the cytochrome b family. The cytochrome bc1 complex contains 11 subunits: 3 respiratory subunits (MT-CYB, CYC1 and UQCRFS1), 2 core proteins (UQCRC1 and UQCRC2) and 6 low-molecular weight proteins (UQCRH/QCR6, UQCRB/QCR7, UQCRQ/QCR8, UQCR10/QCR9, UQCR11/QCR10 and a cleavage product of UQCRFS1). This cytochrome bc1 complex then forms a dimer. It depends on heme b as a cofactor.

The protein localises to the mitochondrion inner membrane. In terms of biological role, component of the ubiquinol-cytochrome c reductase complex (complex III or cytochrome b-c1 complex) that is part of the mitochondrial respiratory chain. The b-c1 complex mediates electron transfer from ubiquinol to cytochrome c. Contributes to the generation of a proton gradient across the mitochondrial membrane that is then used for ATP synthesis. The chain is Cytochrome b (MT-CYB) from Akodon montensis (Montane grass mouse).